A 248-amino-acid polypeptide reads, in one-letter code: Pulmonary surfactant-associated protein A (248 aa).

Positions Met-1–Gly-17 are cleaved as a signal peptide. Residues Gly-28–Pro-100 enclose the Collagen-like domain. The disordered stretch occupies residues Ser-29–Leu-103. Residues Pro-42–Lys-51 show a composition bias toward basic and acidic residues. Residues Pro-54 to Gly-65 show a composition bias toward pro residues. Over residues Leu-69–Pro-82 the composition is skewed to low complexity. A compositionally biased stretch (basic and acidic residues) spans Glu-84–Glu-93. Positions Leu-127–Glu-247 constitute a C-type lectin domain. Cystine bridges form between Cys-155-Cys-246 and Cys-224-Cys-238. N-linked (GlcNAc...) asparagine glycosylation occurs at Asn-207. 4 residues coordinate Ca(2+): Glu-215, Arg-217, Asn-234, and Asp-235.

This sequence belongs to the SFTPA family. As to quaternary structure, oligomeric complex of 6 set of homotrimers.

The protein resides in the secreted. The protein localises to the extracellular space. It is found in the extracellular matrix. It localises to the surface film. In presence of calcium ions, it binds to surfactant phospholipids and contributes to lower the surface tension at the air-liquid interface in the alveoli of the mammalian lung and is essential for normal respiration. Enhances the expression of MYO18A/SP-R210 on alveolar macrophages. The sequence is that of Pulmonary surfactant-associated protein A (SFTPA1) from Ovis aries (Sheep).